The sequence spans 392 residues: Chorismate synthase (392 aa).

The NADP(+) site is built by arginine 39 and arginine 45. FMN-binding positions include 131 to 133 (RSS), 255 to 256 (NA), glycine 300, 315 to 319 (KPIPT), and arginine 341.

Belongs to the chorismate synthase family. As to quaternary structure, homotetramer. FMNH2 is required as a cofactor.

It carries out the reaction 5-O-(1-carboxyvinyl)-3-phosphoshikimate = chorismate + phosphate. It participates in metabolic intermediate biosynthesis; chorismate biosynthesis; chorismate from D-erythrose 4-phosphate and phosphoenolpyruvate: step 7/7. Functionally, catalyzes the anti-1,4-elimination of the C-3 phosphate and the C-6 proR hydrogen from 5-enolpyruvylshikimate-3-phosphate (EPSP) to yield chorismate, which is the branch point compound that serves as the starting substrate for the three terminal pathways of aromatic amino acid biosynthesis. This reaction introduces a second double bond into the aromatic ring system. In Leuconostoc mesenteroides subsp. mesenteroides (strain ATCC 8293 / DSM 20343 / BCRC 11652 / CCM 1803 / JCM 6124 / NCDO 523 / NBRC 100496 / NCIMB 8023 / NCTC 12954 / NRRL B-1118 / 37Y), this protein is Chorismate synthase.